Reading from the N-terminus, the 1390-residue chain is ATPase family AAA domain-containing protein 2 (1390 aa).

Residues 40-63 (RSAGAAQKKPAATTAKAGDGSSVK) are disordered. A compositionally biased stretch (low complexity) spans 42-57 (AGAAQKKPAATTAKAG). S60 and S61 each carry phosphoserine. A Glycyl lysine isopeptide (Lys-Gly) (interchain with G-Cter in SUMO2) cross-link involves residue K125. 2 positions are modified to phosphoserine: S165 and S170. The tract at residues 216–380 (LNMYTRGKQK…HFERRRKRSR (165 aa)) is disordered. The segment covering 223-232 (KQKDIQRTDE) has biased composition (basic and acidic residues). Over residues 244-288 (SSEEGEDQEHEDDGEDEDDEDDDDDDDDDDDDDDEDDEDEEDGEE) the composition is skewed to acidic residues. Residue K317 forms a Glycyl lysine isopeptide (Lys-Gly) (interchain with G-Cter in SUMO2) linkage. S327, S337, S342, and S410 each carry phosphoserine. Residue 467–474 (GPPGTGKT) participates in ATP binding. A phosphoserine mark is found at S746 and S751. Coiled coils occupy residues 970-994 (LTAE…IFLR) and 1086-1112 (YAII…KKRG). Positions 980 to 1092 (EQEEDTFREL…DTAYAIIKEE (113 aa)) constitute a Bromo domain. Residues 1124–1163 (HVMPKQNSTLVGDKRSDPEQNEKLKTPSTPVACSTPAQLK) are disordered. A Glycyl lysine isopeptide (Lys-Gly) (interchain with G-Cter in SUMO2) cross-link involves residue K1128. Basic and acidic residues predominate over residues 1135–1148 (GDKRSDPEQNEKLK). S1139 carries the phosphoserine modification. K1148 participates in a covalent cross-link: Glycyl lysine isopeptide (Lys-Gly) (interchain with G-Cter in SUMO2). Phosphothreonine occurs at positions 1149, 1152, and 1176. The segment covering 1149–1160 (TPSTPVACSTPA) has biased composition (polar residues). Residues 1181–1242 (RKISQAKDDS…SESKLELRNN (62 aa)) are disordered. Residues 1185 to 1200 (QAKDDSQNAIDHKIES) show a composition bias toward basic and acidic residues. S1200, S1233, and S1235 each carry phosphoserine. Positions 1229–1242 (QQNASESKLELRNN) are enriched in polar residues. A Glycyl lysine isopeptide (Lys-Gly) (interchain with G-Cter in SUMO2) cross-link involves residue K1236. A phosphoserine mark is found at S1243 and S1302. Residue T1323 is modified to Phosphothreonine.

Belongs to the AAA ATPase family. As to quaternary structure, interacts with ESR1 and NCOA3 and these interactions are enhanced by estradiol. Interacts with acetylated lysine residues on histone H1.4, H2A, H2B and H3 (in vitro). In terms of tissue distribution, highly expressed in estrogen receptor positive breast tumors and in osteosarcoma tumors.

It is found in the nucleus. It catalyses the reaction ATP + H2O = ADP + phosphate + H(+). May be a transcriptional coactivator of the nuclear receptor ESR1 required to induce the expression of a subset of estradiol target genes, such as CCND1, MYC and E2F1. May play a role in the recruitment or occupancy of CREBBP at some ESR1 target gene promoters. May be required for histone hyperacetylation. Involved in the estrogen-induced cell proliferation and cell cycle progression of breast cancer cells. The sequence is that of ATPase family AAA domain-containing protein 2 (ATAD2) from Homo sapiens (Human).